Reading from the N-terminus, the 113-residue chain is Cytochrome c55X (113 aa).

The signal sequence occupies residues 1-26 (MTVARHAVSRLGLALASFLLFPLALA). The heme c site is built by C45, C48, and H49.

In terms of processing, binds 1 heme c group covalently per subunit.

It is found in the periplasm. Monoheme c-type cytochrome. The sequence is that of Cytochrome c55X (nirC) from Stutzerimonas stutzeri (Pseudomonas stutzeri).